The primary structure comprises 616 residues: Chaperone protein HscA (616 aa).

It belongs to the heat shock protein 70 family.

Its function is as follows. Chaperone involved in the maturation of iron-sulfur cluster-containing proteins. Has a low intrinsic ATPase activity which is markedly stimulated by HscB. Involved in the maturation of IscU. The polypeptide is Chaperone protein HscA (Salmonella typhimurium (strain LT2 / SGSC1412 / ATCC 700720)).